The chain runs to 419 residues: Gamma-glutamyl phosphate reductase (419 aa).

It belongs to the gamma-glutamyl phosphate reductase family.

It is found in the cytoplasm. It carries out the reaction L-glutamate 5-semialdehyde + phosphate + NADP(+) = L-glutamyl 5-phosphate + NADPH + H(+). It participates in amino-acid biosynthesis; L-proline biosynthesis; L-glutamate 5-semialdehyde from L-glutamate: step 2/2. Catalyzes the NADPH-dependent reduction of L-glutamate 5-phosphate into L-glutamate 5-semialdehyde and phosphate. The product spontaneously undergoes cyclization to form 1-pyrroline-5-carboxylate. The protein is Gamma-glutamyl phosphate reductase of Bordetella avium (strain 197N).